The following is a 274-amino-acid chain: 2,3,4,5-tetrahydropyridine-2,6-dicarboxylate N-succinyltransferase (274 aa).

This sequence belongs to the transferase hexapeptide repeat family.

The protein localises to the cytoplasm. The enzyme catalyses (S)-2,3,4,5-tetrahydrodipicolinate + succinyl-CoA + H2O = (S)-2-succinylamino-6-oxoheptanedioate + CoA. Its pathway is amino-acid biosynthesis; L-lysine biosynthesis via DAP pathway; LL-2,6-diaminopimelate from (S)-tetrahydrodipicolinate (succinylase route): step 1/3. This is 2,3,4,5-tetrahydropyridine-2,6-dicarboxylate N-succinyltransferase from Leptothrix cholodnii (strain ATCC 51168 / LMG 8142 / SP-6) (Leptothrix discophora (strain SP-6)).